A 200-amino-acid chain; its full sequence is Methylthioribulose-1-phosphate dehydratase-like protein (200 aa).

The protein belongs to the aldolase class II family. MtnB subfamily.

The sequence is that of Methylthioribulose-1-phosphate dehydratase-like protein from Schizosaccharomyces pombe (strain 972 / ATCC 24843) (Fission yeast).